The primary structure comprises 216 residues: 3-isopropylmalate dehydratase small subunit (216 aa).

The protein belongs to the LeuD family. LeuD type 1 subfamily. As to quaternary structure, heterodimer of LeuC and LeuD.

It catalyses the reaction (2R,3S)-3-isopropylmalate = (2S)-2-isopropylmalate. The protein operates within amino-acid biosynthesis; L-leucine biosynthesis; L-leucine from 3-methyl-2-oxobutanoate: step 2/4. In terms of biological role, catalyzes the isomerization between 2-isopropylmalate and 3-isopropylmalate, via the formation of 2-isopropylmaleate. The sequence is that of 3-isopropylmalate dehydratase small subunit from Bordetella avium (strain 197N).